A 770-amino-acid chain; its full sequence is Transducin-like enhancer protein 1 (770 aa).

A q domain region spans residues 1-131 (MFPQSRHPTP…IIGQQQLQAQ (131 aa)). Disordered stretches follow at residues 128–157 (LQAQ…GIPP) and 176–346 (HLAI…PAME). Residues 132–199 (HLSHGHGPPV…RHRDRESGTS (68 aa)) are GP domain. A compositionally biased stretch (low complexity) spans 146 to 157 (HPSGLQPPGIPP). Basic and acidic residues-rich tracts occupy residues 178-196 (AIKD…DRES) and 209-244 (RSTD…KSDD). Positions 200–266 (NSLLVPDSLR…SPHASPTHSP (67 aa)) are ccN domain. The Nuclear localization signal signature appears at 225 to 228 (KKRK). Ser-237 bears the Phosphoserine; by CK2 mark. The span at 255-264 (PSSPHASPTH) shows a compositional bias: low complexity. Ser-257, Ser-261, and Ser-265 each carry phosphoserine; by CDK1. Residues 265-281 (SPRENGIDKNRLLKKDA) are compositionally biased toward basic and acidic residues. The tract at residues 267–450 (RENGIDKNRL…GGKPAYSFHV (184 aa)) is SP domain. A compositionally biased stretch (low complexity) spans 282–297 (SGSPASTASSGSSSSL). Phosphoserine is present on Ser-284. Over residues 298 to 308 (KSKEVSLHEKA) the composition is skewed to basic and acidic residues. 6 WD repeats span residues 470–501 (GIPR…HVYT), 528–558 (NRDN…SIWD), 572–602 (SSAP…AVWD), 614–644 (GHTD…RSWD), 696–726 (LHES…NAWR), and 737–767 (KESS…TVYE).

Belongs to the WD repeat Groucho/TLE family. In terms of assembly, homooligomer and heterooligomer with other family members. Binds RUNX1, RUNX3, FOXA2, KDM6A, UTY, histone H3, HESX1, ESRRG and the NF-kappa-B subunit RELA. Interacts with HES1 (via WRPW motif). Binds TCF7, LEF1, TCF7L1 and TCF7L2. Interacts with SIX3. Interacts with EFNB1. Interacts with TLE4. Interacts with FOXG1/BF-1; the interaction is inhibited by TLE6/GRG6. In terms of processing, phosphorylated, probably by CDK1. The degree of phosphorylation varies throughout the cell cycle, and is highest at the G2/M transition. Becomes hyperphosphorylated in response to cell differentiation and interaction with HES1 or RUNX1. Ubiquitinated by XIAP/BIRC4. As to expression, highly expressed in liver and lung. Detected at slightly lower levels in heart, brain, kidney and testis. Detected in fetal and adult stomach and small intestine, in adult ileum, duodenum and colon. Expressed in bone marrow-derived macrophages. In terms of tissue distribution, most abundant at the base of the crypts of Lieberkuhn in the small intestine.

It localises to the nucleus. The protein localises to the cytoplasm. In terms of biological role, transcriptional corepressor that binds to a number of transcription factors. Inhibits NF-kappa-B-regulated gene expression. Inhibits the transcriptional activation mediated by FOXA2, and by CTNNB1 and TCF family members in Wnt signaling. Enhances FOXG1/BF-1- and HES1-mediated transcriptional repression. The effects of full-length TLE family members may be modulated by association with dominant-negative AES. Unusual function as coactivator for ESRRG. The polypeptide is Transducin-like enhancer protein 1 (Tle1) (Mus musculus (Mouse)).